The following is a 227-amino-acid chain: Cytochrome c oxidase subunit 2 (227 aa).

Topologically, residues 1 to 14 are mitochondrial intermembrane; sequence MAYPFQLGFQDAAS. Residues 15–45 traverse the membrane as a helical segment; that stretch reads PIMEELLHFHDHTLMIVFLISSLVLYIITLM. Residues 46–59 are Mitochondrial matrix-facing; sequence LTTKLTHTSTMDAQ. Residues 60-87 form a helical membrane-spanning segment; sequence EVETVWTILPAIILILIALPSLRILYMM. Topologically, residues 88–227 are mitochondrial intermembrane; that stretch reads DEVNNPSLTV…VFEKWSVSML (140 aa). His161, Cys196, Glu198, Cys200, His204, and Met207 together coordinate Cu cation. Mg(2+) is bound at residue Glu198.

This sequence belongs to the cytochrome c oxidase subunit 2 family. In terms of assembly, component of the cytochrome c oxidase (complex IV, CIV), a multisubunit enzyme composed of 14 subunits. The complex is composed of a catalytic core of 3 subunits MT-CO1, MT-CO2 and MT-CO3, encoded in the mitochondrial DNA, and 11 supernumerary subunits COX4I, COX5A, COX5B, COX6A, COX6B, COX6C, COX7A, COX7B, COX7C, COX8 and NDUFA4, which are encoded in the nuclear genome. The complex exists as a monomer or a dimer and forms supercomplexes (SCs) in the inner mitochondrial membrane with NADH-ubiquinone oxidoreductase (complex I, CI) and ubiquinol-cytochrome c oxidoreductase (cytochrome b-c1 complex, complex III, CIII), resulting in different assemblies (supercomplex SCI(1)III(2)IV(1) and megacomplex MCI(2)III(2)IV(2)). Found in a complex with TMEM177, COA6, COX18, COX20, SCO1 and SCO2. Interacts with TMEM177 in a COX20-dependent manner. Interacts with COX20. Interacts with COX16. Requires Cu cation as cofactor.

The protein localises to the mitochondrion inner membrane. It catalyses the reaction 4 Fe(II)-[cytochrome c] + O2 + 8 H(+)(in) = 4 Fe(III)-[cytochrome c] + 2 H2O + 4 H(+)(out). In terms of biological role, component of the cytochrome c oxidase, the last enzyme in the mitochondrial electron transport chain which drives oxidative phosphorylation. The respiratory chain contains 3 multisubunit complexes succinate dehydrogenase (complex II, CII), ubiquinol-cytochrome c oxidoreductase (cytochrome b-c1 complex, complex III, CIII) and cytochrome c oxidase (complex IV, CIV), that cooperate to transfer electrons derived from NADH and succinate to molecular oxygen, creating an electrochemical gradient over the inner membrane that drives transmembrane transport and the ATP synthase. Cytochrome c oxidase is the component of the respiratory chain that catalyzes the reduction of oxygen to water. Electrons originating from reduced cytochrome c in the intermembrane space (IMS) are transferred via the dinuclear copper A center (CU(A)) of subunit 2 and heme A of subunit 1 to the active site in subunit 1, a binuclear center (BNC) formed by heme A3 and copper B (CU(B)). The BNC reduces molecular oxygen to 2 water molecules using 4 electrons from cytochrome c in the IMS and 4 protons from the mitochondrial matrix. The chain is Cytochrome c oxidase subunit 2 (MT-CO2) from Balaenoptera physalus (Fin whale).